The following is a 243-amino-acid chain: Outer membrane protein A (243 aa).

Transmembrane regions (beta stranded) follow at residues 1–8, 13–21, 48–57, 62–69, and 88–96; these read LTAKLGYP, LDIYTRLGG, PVFAGGVEWA, IATRLEYQ, and LLSLGVSYR. 4 consecutive repeat copies span residues 107 to 108, 109 to 110, 111 to 112, and 113 to 114. The 4 X 2 AA tandem repeats of A-P stretch occupies residues 107–114; it reads APAPAPAP. The region spanning 116–243 is the OmpA-like domain; sequence VQTKHFTLKS…RRVEIEVKGI (128 aa). Cysteine 217 and cysteine 229 are oxidised to a cystine.

The protein belongs to the outer membrane OOP (TC 1.B.6) superfamily. OmpA family. In terms of assembly, monomer and homodimer.

Its subcellular location is the cell outer membrane. Its function is as follows. With TolR probably plays a role in maintaining the position of the peptidoglycan cell wall in the periplasm. Acts as a porin with low permeability that allows slow penetration of small solutes; an internal gate slows down solute passage. In terms of biological role, required for conjugation with F-type plasmids; probably serves as the mating receptor on recipient cells. This chain is Outer membrane protein A, found in Escherichia fergusonii.